A 676-amino-acid polypeptide reads, in one-letter code: MAPKTTLIAEPELVSKSVNTIRFLAIDAVEKAKSGHPGMPMGCAPMGHVLYDEFMRFNPKNPYWFNRDRFVLSAGHGCMLQYALLHLSGYDSVKEEDLKSLRQWGSRTPAHPENFETPGVEVTTGPLGQGIASAVGLAVAEKHLAARYNKPGFEIVDHYTYVILGDGCQMEGVSNEACSLAAHWGLGKLIALYDDNHITIDGDTDVAFTEDVDKRFDALGWHVIWVKNGNDGCDEIRAAIEEAKSVKDRPTMIKVTTTIGYGAPSKANTYGVHGNALGPKEAEATRKNLGWPYEPFHVPDDVKKHWSRHIAEGAALESAWNAKFAEFQKKFPEEAADLKSIITGELPTNWESIFPTYTPENPGLPTRTLSHQILNGLGDVLPGLLGGSADLTLSNMAFLKNSGDFQKKSPGERNVKFGAREHAMGSICNGLALHSPGLLPYCATYFVFTDYMRAAMRISALSKARVLYIMTHDSIGLGEDGPTHQPVEHLASFRAMPNILTLRPADGNETAGAYRAAVQNGERPSILVLARQKLPQLPGTSIEGVSKGGYVISDNSRGGNSKPDVILIGTGSELEIAARAGDELRKEGKKVRVVSLVCWELFAEQSEKYRETVLPSGVTARVSVEAGSTFGWERFIGPKGKAVGIDRFGASAPAERLFKEFGITVEAVVAAAKEIC.

His-36 is a binding site for substrate. Residues His-76 and 125-127 (GPL) contribute to the thiamine diphosphate site. Asp-166 contacts Mg(2+). The thiamine diphosphate site is built by Gly-167 and Asn-196. Positions 196 and 198 each coordinate Mg(2+). The substrate site is built by His-273, Arg-367, and Ser-394. His-273 is a binding site for thiamine diphosphate. Thiamine diphosphate is bound by residues Glu-421 and Phe-448. Glu-421 (proton donor) is an active-site residue. 3 residues coordinate substrate: His-472, Asp-480, and Arg-531.

This sequence belongs to the transketolase family. Homodimer. Requires Mg(2+) as cofactor. The cofactor is Ca(2+). Mn(2+) serves as cofactor. Co(2+) is required as a cofactor. It depends on thiamine diphosphate as a cofactor. As to expression, leaves and roots.

It carries out the reaction D-sedoheptulose 7-phosphate + D-glyceraldehyde 3-phosphate = aldehydo-D-ribose 5-phosphate + D-xylulose 5-phosphate. Functionally, could be involved in the conversion of sugars, which are a major phenomenon in the rehydration process. Its function is as follows. Catalyzes the transfer of a two-carbon ketol group from a ketose donor to an aldose acceptor, via a covalent intermediate with the cofactor thiamine pyrophosphate. The chain is Transketolase 7 (TKT7) from Craterostigma plantagineum (Blue gem).